The primary structure comprises 367 residues: Gibberellin 20 oxidase 3 (367 aa).

The region spanning 198–304 (DGDPVMRLNH…RRSLTFFLNP (107 aa)) is the Fe2OG dioxygenase domain. 2-oxoglutarate is bound at residue Tyr208. Fe cation-binding residues include His223, Asp225, and His285. 2 residues coordinate 2-oxoglutarate: Arg295 and Ser297.

It belongs to the iron/ascorbate-dependent oxidoreductase family. Fe(2+) is required as a cofactor. The cofactor is L-ascorbate.

The enzyme catalyses gibberellin A12 + 2 2-oxoglutarate + 3 O2 + H(+) = gibberellin A9 + 2 succinate + 3 CO2 + 2 H2O. It carries out the reaction gibberellin A53 + 2 2-oxoglutarate + 3 O2 + H(+) = gibberellin A20 + 2 succinate + 3 CO2 + 2 H2O. In terms of biological role, key oxidase enzyme in the biosynthesis of gibberellin. Catalyzes the formation of bioactive gibberellins (GAs) via a three-step oxidation at C-20 of the GA skeleton. Controls the elongation of the vegetative shoot and plant height by the regulation of active gibberellin levels. This Oryza sativa subsp. japonica (Rice) protein is Gibberellin 20 oxidase 3.